We begin with the raw amino-acid sequence, 335 residues long: Adenine deaminase (335 aa).

Zn(2+) is bound by residues H14, H16, and H194. The Proton donor role is filled by E197. Zn(2+) is bound at residue D275. D276 is a binding site for substrate.

This sequence belongs to the metallo-dependent hydrolases superfamily. Adenosine and AMP deaminases family. Adenine deaminase type 2 subfamily. Zn(2+) serves as cofactor.

The enzyme catalyses adenine + H2O + H(+) = hypoxanthine + NH4(+). In terms of biological role, catalyzes the hydrolytic deamination of adenine to hypoxanthine. Plays an important role in the purine salvage pathway and in nitrogen catabolism. This chain is Adenine deaminase, found in Chlorobium phaeobacteroides (strain BS1).